A 672-amino-acid polypeptide reads, in one-letter code: Transmembrane 9 superfamily member 2 (672 aa).

Positions 1–18 are cleaved as a signal peptide; the sequence is MKRGVWLLIYCYATLTKG. The Extracellular segment spans residues 19–307; the sequence is FSLPGLSPTT…DKYLHIYDPQ (289 aa). Residues 308 to 328 traverse the membrane as a helical segment; the sequence is IQWFSLINFSVIVILLSSVVM. At 329–383 the chain is on the cytoplasmic side; that stretch reads HSLLRALKSDLARYNELNLDNEFHEDSGWKLGHGDVFRTPSKSMLLSILVGSGMQ. A helical transmembrane segment spans residues 384–404; that stretch reads LFLMVMCSIFFAAVGLVSPVS. Topologically, residues 405–410 are extracellular; that stretch reads RGSLPT. The helical transmembrane segment at 411–431 threads the bilayer; that stretch reads VMFVLYALFGFVGSYASMGVY. Over 432–447 the chain is Cytoplasmic; sequence KFFRGPYWKANMILTP. The chain crosses the membrane as a helical span at residues 448–468; that stretch reads ILLPGAIFLLIVIMNFFLLFA. The Extracellular segment spans residues 469–479; it reads HSSGVIPARSL. A helical membrane pass occupies residues 480–500; sequence FFIILLWFLVSVPLSFAGSIV. Residues 501 to 532 lie on the Cytoplasmic side of the membrane; that stretch reads AHKQCNWDEHPTKTNQIARQIPYQPWYLRTAQ. A helical transmembrane segment spans residues 533-553; sequence ATLIAGIFSFGSIAVELYFIY. The Extracellular segment spans residues 554–565; that stretch reads SSLWFNKIFYMF. A helical transmembrane segment spans residues 566 to 586; it reads GFLLFSFLLLTLTTSLVTILI. Residues 587–601 lie on the Cytoplasmic side of the membrane; it reads TYYSLCLENWLWQWR. A helical transmembrane segment spans residues 602–622; it reads SFIIGGLGCSIYTFIHSILFT. The Extracellular segment spans residues 623 to 628; the sequence is KFKLGG. A helical membrane pass occupies residues 629-649; sequence VITVVLYLGYSLIISALCCVV. Over 650–672 the chain is Cytoplasmic; that stretch reads TGAIGFFSSMFFIRKIYSAIKVE.

It belongs to the nonaspanin (TM9SF) (TC 9.A.2) family.

The protein resides in the vacuole membrane. In terms of biological role, with EMP70 and TMN3, plays a critical role in the late stages of a nutrient-controlled pathway notably regulating FLO11 gene expression. Acts downstream of RAS2 and TOR. Essential for cell adhesion and filamentous growth. May play a role as effector of cellular copper homeostasis. This chain is Transmembrane 9 superfamily member 2 (TMN2), found in Saccharomyces cerevisiae (strain ATCC 204508 / S288c) (Baker's yeast).